The following is a 368-amino-acid chain: MHVMRLSIHRLRRFQTVELHPASALNLLTGDNGAGKTSVLEALHLMAYGRSFRGRVRDGLIQQGANDLEVFVEWKEGGSAAGERTRRAGLRHSGQEWTGRLDGEDVAQLGSLCAALAVVTFEPGSHVLISGGGEPRRRFLDWGLFHVEPDFLALWRRYVRALKQRNALLKQGAQPRMLDAWDHELAESGETLTSRRMRYLERLQDRLIPVADVIAPSLGLSALTFAPGWKRHEVSLADALLLARDRDRQNGYTSQGPHRADWMPHFDVLPGKDALSRGQAKLTALACLLAQAEDFAFERSEWPVIALDDLGSELDRHHQARVLHRLVSAPAQMLITATEIPPGLADAGALLHRFHVEHGQVALQAPSD.

30 to 37 (GDNGAGKT) is a binding site for ATP.

It belongs to the RecF family.

It is found in the cytoplasm. Functionally, the RecF protein is involved in DNA metabolism; it is required for DNA replication and normal SOS inducibility. RecF binds preferentially to single-stranded, linear DNA. It also seems to bind ATP. The chain is DNA replication and repair protein RecF from Xanthomonas oryzae pv. oryzae (strain KACC10331 / KXO85).